We begin with the raw amino-acid sequence, 106 residues long: Large ribosomal subunit protein eL30 (106 aa).

It belongs to the eukaryotic ribosomal protein eL30 family.

The sequence is that of Large ribosomal subunit protein eL30 from Methanococcus maripaludis (strain C7 / ATCC BAA-1331).